Reading from the N-terminus, the 283-residue chain is Acetylglutamate kinase (283 aa).

Residues 63-64 (GG), arginine 85, and asparagine 178 each bind substrate.

Belongs to the acetylglutamate kinase family. ArgB subfamily.

It is found in the cytoplasm. The enzyme catalyses N-acetyl-L-glutamate + ATP = N-acetyl-L-glutamyl 5-phosphate + ADP. It participates in amino-acid biosynthesis; L-arginine biosynthesis; N(2)-acetyl-L-ornithine from L-glutamate: step 2/4. Functionally, catalyzes the ATP-dependent phosphorylation of N-acetyl-L-glutamate. This is Acetylglutamate kinase from Prochlorococcus marinus (strain MIT 9215).